Here is an 822-residue protein sequence, read N- to C-terminus: General transcription factor 3C polypeptide 4 (822 aa).

An N-acetylmethionine modification is found at methionine 1. The interval 1–41 is disordered; sequence MNTADQARVGPADDGPAPSGEEEGEGGGEAGGKEPAADAAP. Serine 19 is modified (phosphoserine). Residue lysine 225 forms a Glycyl lysine isopeptide (Lys-Gly) (interchain with G-Cter in SUMO2) linkage. Serine 604 and serine 611 each carry phosphoserine. The segment at 608–663 is disordered; it reads LVDSPGMGNADDEQQEEGTSSKQVVKQGLQERSKEGDVEEPTDDSLPTTGDAGGRE. Lysine 629 is covalently cross-linked (Glycyl lysine isopeptide (Lys-Gly) (interchain with G-Cter in SUMO2)). Position 652 is a phosphoserine (serine 652).

This sequence belongs to the TFIIIC subunit 4 family. As to quaternary structure, part of the TFIIIC subcomplex TFIIIC2, consisting of six subunits, GTF3C1, GTF3C2, GTF3C3, GTF3C4, GTF3C5 and GTF3C6. Interacts with BRF1, GTF3C1, GTF3C2, GTF3C5, GTF3C6, POLR3C and POLR3F.

The protein resides in the nucleus. The catalysed reaction is L-lysyl-[protein] + acetyl-CoA = N(6)-acetyl-L-lysyl-[protein] + CoA + H(+). In terms of biological role, essential for RNA polymerase III to make a number of small nuclear and cytoplasmic RNAs, including 5S RNA, tRNA, and adenovirus-associated (VA) RNA of both cellular and viral origin. Has histone acetyltransferase activity (HAT) with unique specificity for free and nucleosomal H3. May cooperate with GTF3C5 in facilitating the recruitment of TFIIIB and RNA polymerase through direct interactions with BRF1, POLR3C and POLR3F. May be localized close to the A box. In Homo sapiens (Human), this protein is General transcription factor 3C polypeptide 4 (GTF3C4).